Reading from the N-terminus, the 609-residue chain is Cationic amino acid transporter 3, mitochondrial (609 aa).

The transit peptide at 1–14 (MGCLRSLVRRKQFD) directs the protein to the mitochondrion. 14 helical membrane-spanning segments follow: residues 38-58 (LIAIGVGSTIGAGVYILVGTV), 66-86 (ALALSFLIAGISAALSAFCYA), 104-124 (ICIGEGVAWLIGWALILEYTI), 161-181 (IVVDPCAAVLVFIVTGLCCLG), 190-210 (GIVTTANVFVMIFVIVAGSYL), 226-246 (FPYGVDGMLTGSATVFFAYIG), 270-290 (ISLLLCCLLYMMVSVVIVGLV), 314-334 (AYLINLGAVMALCSALMGSIL), 361-381 (QVPINGTITTGVCAAILAFFM), 388-408 (GMVSVGTLVAFTMVAISLLIV), 474-494 (IMFTCIGNFLLSYAASSFLLP), 499-519 (YSLCGVGGLFLLVGLIVLICI), 534-554 (FICPFVPLLPIVCILINMYLL), and 558-578 (GAATWVRVSVWLFLGVVVYIF).

This sequence belongs to the amino acid-polyamine-organocation (APC) superfamily. Cationic amino acid transporter (CAT) (TC 2.A.3.3) family. In terms of tissue distribution, expressed in roots, stems, flowers, and leaves.

It is found in the mitochondrion membrane. Functionally, permease involved in the transport of the cationic neutral or acidic amino acids. The protein is Cationic amino acid transporter 3, mitochondrial (CAT3) of Arabidopsis thaliana (Mouse-ear cress).